The following is a 280-amino-acid chain: Ribosomal RNA small subunit methyltransferase A (280 aa).

Positions 28, 30, 55, 77, 103, and 122 each coordinate S-adenosyl-L-methionine.

Belongs to the class I-like SAM-binding methyltransferase superfamily. rRNA adenine N(6)-methyltransferase family. RsmA subfamily.

It localises to the cytoplasm. The catalysed reaction is adenosine(1518)/adenosine(1519) in 16S rRNA + 4 S-adenosyl-L-methionine = N(6)-dimethyladenosine(1518)/N(6)-dimethyladenosine(1519) in 16S rRNA + 4 S-adenosyl-L-homocysteine + 4 H(+). Functionally, specifically dimethylates two adjacent adenosines (A1518 and A1519) in the loop of a conserved hairpin near the 3'-end of 16S rRNA in the 30S particle. May play a critical role in biogenesis of 30S subunits. The chain is Ribosomal RNA small subunit methyltransferase A from Roseobacter denitrificans (strain ATCC 33942 / OCh 114) (Erythrobacter sp. (strain OCh 114)).